The following is a 1720-amino-acid chain: TOG array regulator of axonemal microtubules protein 1 (1720 aa).

TOG stretches follow at residues 94-312 (EEDT…RRLE) and 352-596 (PQEL…MPSS). HEAT repeat units lie at residues 175 to 212 (AFSL…RSPG), 214 to 247 (VLRT…TEDL), 251 to 289 (LDLT…RLGQ), 345 to 384 (NLKF…KFNP), 390 to 427 (SSLV…RLGE), 431 to 466 (QFLG…MKEV), 467 to 504 (GPQQ…YPSE), and 506 to 543 (FDLP…SMGS). Polar residues-rich tracts occupy residues 794 to 809 (FGSQ…QNPS), 819 to 829 (PVSSPRTSPKH), 842 to 852 (DNSVNFSNSWP), and 868 to 877 (LVSQKSSDPT). Disordered regions lie at residues 794–924 (FGSQ…SLLP), 970–998 (HSSL…ESPD), and 1067–1087 (KKIS…NPQQ). Polar residues predominate over residues 1073 to 1087 (AEQSPSAGSSSNPQQ). Residues 1256–1425 (EIALTEALRL…YIKDSVRNLQ (170 aa)) are TOG 3. HEAT repeat units follow at residues 1294–1331 (TKLH…YLKK) and 1335–1372 (QELD…NVTP). The tract at residues 1430-1462 (GEIPLDTPSAKGRRSHTGSVGNTRSSSVSRDAF) is disordered. Residues 1446-1458 (TGSVGNTRSSSVS) show a composition bias toward polar residues. The interval 1484–1720 (SLESAEYLKL…LLDMTILNEL (237 aa)) is TOG 4. HEAT repeat units follow at residues 1485-1522 (LESA…NNQD), 1526-1563 (GNIV…LLRD), and 1567-1605 (PIIN…HVDN).

This sequence belongs to the Crescerin family. As to quaternary structure, interacts with ARMC9, CCDC66, CEP104 and CSPP1.

It localises to the cell projection. Its subcellular location is the cilium. The protein resides in the cytoplasm. The protein localises to the cytoskeleton. It is found in the cilium axoneme. In terms of biological role, involved in ciliogenesis. It is required for appropriate acetylation and polyglutamylation of ciliary microtubules, and regulation of cilium length. Interacts with microtubules and promotes microtubule polymerization via its HEAT repeat domains, especially those in TOG region 2 and 4. The polypeptide is TOG array regulator of axonemal microtubules protein 1 (Homo sapiens (Human)).